Here is a 75-residue protein sequence, read N- to C-terminus: Putative DNA-directed RNA polymerase subunit omega (75 aa).

This sequence belongs to the RNA polymerase subunit omega family.

It is found in the plastid. The protein resides in the chloroplast. The enzyme catalyses RNA(n) + a ribonucleoside 5'-triphosphate = RNA(n+1) + diphosphate. Its function is as follows. May be involved in RNA polymerase activity. The polypeptide is Putative DNA-directed RNA polymerase subunit omega (Pyropia yezoensis (Susabi-nori)).